The chain runs to 97 residues: Large ribosomal subunit protein uL23 (97 aa).

Belongs to the universal ribosomal protein uL23 family. Part of the 50S ribosomal subunit. Contacts protein L29, and trigger factor when it is bound to the ribosome.

One of the early assembly proteins it binds 23S rRNA. One of the proteins that surrounds the polypeptide exit tunnel on the outside of the ribosome. Forms the main docking site for trigger factor binding to the ribosome. The chain is Large ribosomal subunit protein uL23 from Chelativorans sp. (strain BNC1).